Reading from the N-terminus, the 833-residue chain is MITLLLYLCVICNAIVLIRADSIADPWPEARHLLNTIAKSRDPMKEAAMEPNADEFVGFYVPMDYSPRNEEKNYQSIWQNEITDSQRHIYELLVQSSEQFNNSEATYTLSQIHLWSQYNFPHNMTLAHKYLEKFNDLTHFTNHSAIFDLAVMYATGGCASGNDQTVIPQDSAKALLYYQRAAQLGNLKAKQVLAYKYYSGFNVPRNFHKSLVLYRDIAEQLRKSYSRDEWDIVFPYWESYNVRISDFESGLLGKGLNSVPSSTVRKRTTRPDIGSPFIAQVNGVQMTLQIEPMGRFAFNGNDGNINGDEDDEDASERRIIRIYYAALNDYKGTYSQSRNCERAKNLLELTYKEFQPHVDNLDPLQVFYYVRCLQLLGHMYFTGEGSSKPNIHMAEEILTTSLEISRRAQGPIGRACIDLGLINQYITNNISQAISYYMKAMKTQANNGIVEFQLSKLATSFPEEKIGDPFNLMETAYLNGFIPAIYEFAVMIESGMNSKSSVENTAYLFKTFVDKNEAIMAPKLRTAFAALINDRSEVALWAYSQLAEQGYETAQVSAAYLMYQLPYEFEDPPRTTDQRKTLAISYYTRAFKQGNIDAGVVAGDIYFQMQNYSKAMALYQGAALKYSIQAIWNLGYMHEHGLGVNRDFHLAKRYYDQVSEHDHRFYLASKLSVLKLHLKSWLTWITREKVNYWKPSSPLNPNEDTQHSKTSWYKQLTKILQRMRHKEDSDKAAEDSHKHRTVVQNGANHRGDDQEEASEILGFQMEDLVTMGCILGIFLLSILMSTLAARRGWNVRFNGAQLNANGNRQQEQQQQQQAQGPPGWDFNVQIFAI.

The N-terminal stretch at 1–20 (MITLLLYLCVICNAIVLIRA) is a signal peptide. 3 N-linked (GlcNAc...) asparagine glycosylation sites follow: Asn101, Asn123, and Asn142. The Sel1-like 1 repeat unit spans residues 103–139 (SEATYTLSQIHLWSQYNFPHNMTLAHKYLEKFNDLTH). Sel1-like repeat units follow at residues 143 to 186 (HSAI…QLGN), 187 to 222 (LKAKQVLAYKYYSGFNVPRNFHKSLVLYRDIAEQLR), 413 to 445 (GRACIDLGLINQYITNNISQAISYYMKAMKTQA), 552 to 595 (ETAQ…KQGN), 596 to 627 (IDAGVVAGDIYFQMQNYSKAMALYQGAALKYS), and 628 to 663 (IQAIWNLGYMHEHGLGVNRDFHLAKRYYDQVSEHDH). A glycan (N-linked (GlcNAc...) asparagine) is linked at Asn429. An N-linked (GlcNAc...) asparagine glycan is attached at Asn611. Residues 768–788 (LVTMGCILGIFLLSILMSTLA) traverse the membrane as a helical segment. The interval 805–824 (NGNRQQEQQQQQQAQGPPGW) is disordered. Positions 809–819 (QQEQQQQQQAQ) are enriched in low complexity.

The protein belongs to the sel-1 family. In terms of assembly, component of the HRD1 ubiquitin ligase complex which contains the E3 ligase HRD1, its cofactors HRD3, USA1 and DER1, substrate recruiting factor YOS9 and CDC48-binding protein UBX2. Within the complex, interacts directly with HRD1 and YOS9 (via N-terminus). In ERAD-L, HRD3 and YOS9 jointly bind misfolded glycoproteins in the endoplasmic reticulum (ER) lumen. Movement of ERAD-L substrates through the ER membrane is facilitated by HRD1 and DER1 which have lateral gates facing each other and which distort the membrane region between the lateral gates, making it much thinner than a normal phospholipid bilayer. Substrates insert into the membrane as a hairpin loop with one strand interacting with DER1 and the other with HRD1. The HRD1 complex interacts with the heterotrimeric CDC48-NPL4-UFD1 ATPase complex which is recruited by UBX2 via its interaction with CDC48 and which moves ubiquitinated substrates to the cytosol for targeting to the proteasome. The HRD1 complex interacts with the ERAD substrates HMG1 and HMG2. Interacts with KAR2.

It localises to the endoplasmic reticulum membrane. Functionally, component of the endoplasmic reticulum quality control (ERQC) system involved in ubiquitin-dependent degradation of misfolded endoplasmic reticulum proteins. Component of the HRD1 ubiquitin ligase complex, which is part of the ERAD-L and ERAD-M pathways responsible for the rapid degradation of soluble lumenal and membrane proteins with misfolded lumenal domains (ERAD-L), or ER-membrane proteins with misfolded transmembrane domains (ERAD-M). ERAD-L substrates are ubiquitinated through HRD1 in conjunction with the E2 ubiquitin-conjugating enzymes UBC1 and UBC7-CUE1. Ubiquitinated substrates are then removed to the cytosol via the action of the CDC48-NPL4-UFD1 ATPase complex and targeted to the proteasome. ERAD-M substrates are processed by the same HRD1-HRD3 core complex, but only a subset of the other components is required for ERAD-M. Stabilizes the HRD1 ubiquitin-protein ligase. Also functions in recruiting misfolded protein substrates in conjunction with YOS9. This Saccharomyces cerevisiae (strain ATCC 204508 / S288c) (Baker's yeast) protein is ERAD-associated E3 ubiquitin-protein ligase component HRD3 (HRD3).